A 124-amino-acid polypeptide reads, in one-letter code: MPTIQQLVRKGRRDKIGKVKTAALKGSPQRRGVCTRVYTTTPKKPNSALRKVARVKLTSQVEVTAYIPGEGHNLQEHSMVLVRGGRVKDLPGVRYKIIRGSLDTQGVKNRKQARSRYGAKKEKS.

D89 bears the 3-methylthioaspartic acid mark. The disordered stretch occupies residues 105–124; sequence QGVKNRKQARSRYGAKKEKS. Over residues 108–118 the composition is skewed to basic residues; that stretch reads KNRKQARSRYG.

It belongs to the universal ribosomal protein uS12 family. As to quaternary structure, part of the 30S ribosomal subunit. Contacts proteins S8 and S17. May interact with IF1 in the 30S initiation complex.

With S4 and S5 plays an important role in translational accuracy. In terms of biological role, interacts with and stabilizes bases of the 16S rRNA that are involved in tRNA selection in the A site and with the mRNA backbone. Located at the interface of the 30S and 50S subunits, it traverses the body of the 30S subunit contacting proteins on the other side and probably holding the rRNA structure together. The combined cluster of proteins S8, S12 and S17 appears to hold together the shoulder and platform of the 30S subunit. In Mycobacterium avium (strain 104), this protein is Small ribosomal subunit protein uS12.